The primary structure comprises 64 residues: GRDAYIADDKNCVYTCAKNSYCNNECTKNGAESGYCQWLGKYGNGCWCKNLPDKVPIRIPGPCR.

4 disulfides stabilise this stretch: cysteine 12-cysteine 63, cysteine 16-cysteine 36, cysteine 22-cysteine 46, and cysteine 26-cysteine 48. Arginine 64 is subject to Arginine amide.

This sequence belongs to the long (4 C-C) scorpion toxin superfamily. Sodium channel inhibitor family. Alpha subfamily. As to expression, expressed by the venom gland.

Its subcellular location is the secreted. Its function is as follows. This non-amidated recombinant toxin slows fast inactivation on Nav1.1/SCN1A (EC(50)=52.8 nM), Nav1.4/SN4A (EC(50)=32 nM), Nav1.5/SCN5A (EC(50)=116.7 nM), Nav1.6/SCN8A (EC(50)=46.3 nM), and Nav1.7/SCN9A (EC(50)=147.4 nM) voltage-gated sodium channels. On Nav1.1/SCN1A channel, acts as an agonist by inducing a shift in both the voltage dependence of channel inactivation (alpha-toxin activity) and activation (beta-toxin activity). This Hottentotta judaicus (Black scorpion) protein is Delta-buthitoxin-Hj2a.